A 249-amino-acid chain; its full sequence is Deoxyribose-phosphate aldolase (249 aa).

Asp94 functions as the Proton donor/acceptor in the catalytic mechanism. Lys158 acts as the Schiff-base intermediate with acetaldehyde in catalysis. Lys200 (proton donor/acceptor) is an active-site residue.

This sequence belongs to the DeoC/FbaB aldolase family. DeoC type 1 subfamily.

The protein localises to the cytoplasm. The enzyme catalyses 2-deoxy-D-ribose 5-phosphate = D-glyceraldehyde 3-phosphate + acetaldehyde. The protein operates within carbohydrate degradation; 2-deoxy-D-ribose 1-phosphate degradation; D-glyceraldehyde 3-phosphate and acetaldehyde from 2-deoxy-alpha-D-ribose 1-phosphate: step 2/2. Functionally, catalyzes a reversible aldol reaction between acetaldehyde and D-glyceraldehyde 3-phosphate to generate 2-deoxy-D-ribose 5-phosphate. The chain is Deoxyribose-phosphate aldolase from Thermoplasma volcanium (strain ATCC 51530 / DSM 4299 / JCM 9571 / NBRC 15438 / GSS1).